Here is a 153-residue protein sequence, read N- to C-terminus: ATP synthase subunit b' (153 aa).

A helical transmembrane segment spans residues 20–40 (TLPLMAAQVVLLTFILNALFF).

Belongs to the ATPase B chain family. As to quaternary structure, F-type ATPases have 2 components, F(1) - the catalytic core - and F(0) - the membrane proton channel. F(1) has five subunits: alpha(3), beta(3), gamma(1), delta(1), epsilon(1). F(0) has four main subunits: a(1), b(1), b'(1) and c(10-14). The alpha and beta chains form an alternating ring which encloses part of the gamma chain. F(1) is attached to F(0) by a central stalk formed by the gamma and epsilon chains, while a peripheral stalk is formed by the delta, b and b' chains.

It is found in the cellular thylakoid membrane. Its function is as follows. F(1)F(0) ATP synthase produces ATP from ADP in the presence of a proton or sodium gradient. F-type ATPases consist of two structural domains, F(1) containing the extramembraneous catalytic core and F(0) containing the membrane proton channel, linked together by a central stalk and a peripheral stalk. During catalysis, ATP synthesis in the catalytic domain of F(1) is coupled via a rotary mechanism of the central stalk subunits to proton translocation. In terms of biological role, component of the F(0) channel, it forms part of the peripheral stalk, linking F(1) to F(0). The b'-subunit is a diverged and duplicated form of b found in plants and photosynthetic bacteria. The polypeptide is ATP synthase subunit b' (Prochlorococcus marinus (strain SARG / CCMP1375 / SS120)).